A 468-amino-acid chain; its full sequence is Argininosuccinate lyase (468 aa).

Belongs to the lyase 1 family. Argininosuccinate lyase subfamily.

It localises to the cytoplasm. It catalyses the reaction 2-(N(omega)-L-arginino)succinate = fumarate + L-arginine. It functions in the pathway amino-acid biosynthesis; L-arginine biosynthesis; L-arginine from L-ornithine and carbamoyl phosphate: step 3/3. The polypeptide is Argininosuccinate lyase (Methanothermobacter thermautotrophicus (strain ATCC 29096 / DSM 1053 / JCM 10044 / NBRC 100330 / Delta H) (Methanobacterium thermoautotrophicum)).